A 410-amino-acid chain; its full sequence is Trifunctional NAD biosynthesis/regulator protein NadR (410 aa).

Residues 7-62 (LKTAIKQQGCTLQQVADASGMTKGYLSQLLNAKIKSPSAQKLEALHRFLGLEFPRQ) form the HTH cro/C1-type domain. Positions 18-37 (LQQVADASGMTKGYLSQLLN) form a DNA-binding region, H-T-H motif. The nicotinamide mononucleotide adenylyltransferase stretch occupies residues 63 to 229 (KKTIGVVFGK…EYIPTEVKPF (167 aa)). Residues 70–73 (FGKF), His77, Arg104, 144–157 (EEGM…WDVW), 177–179 (TSE), 204–206 (MSI), 259–261 (SAW), and 294–297 (YIDF) contribute to the NAD(+) site. The ribosylnicotinamide kinase stretch occupies residues 230–410 (FVRTVAILGG…LVREMMGEQR (181 aa)).

The protein in the central section; belongs to the bacterial NMN adenylyltransferase family. It in the C-terminal section; belongs to the bacterial RNK family. As to quaternary structure, homotetramer.

The protein resides in the cell membrane. It is found in the cytoplasm. The catalysed reaction is beta-nicotinamide D-ribonucleotide + ATP + H(+) = diphosphate + NAD(+). The enzyme catalyses beta-nicotinamide D-riboside + ATP = beta-nicotinamide D-ribonucleotide + ADP + H(+). Its pathway is cofactor biosynthesis; NAD(+) biosynthesis [regulation]. The protein operates within cofactor biosynthesis; NAD(+) biosynthesis; NAD(+) from nicotinamide D-ribonucleotide: step 1/1. Its activity is regulated as follows. Feed-back regulated by NAD. A high level of NAD causes NadR to lose enzymatic activity and repress several NAD synthetic genes; conversely, a low NAD level activates the assimilatory enzymatic activities and leads to derepression of biosynthetic genes. Functionally, this enzyme has three activities: DNA binding, nicotinamide mononucleotide (NMN) adenylyltransferase and ribosylnicotinamide (RN) kinase. The DNA-binding domain binds to the nadB operator sequence in an NAD- and ATP-dependent manner. As NAD levels increase within the cell, the affinity of NadR for the nadB operator regions of nadA, nadB, and pncB increases, repressing the transcription of these genes. The RN kinase activity catalyzes the phosphorylation of RN to form nicotinamide ribonucleotide. The NMN adenylyltransferase activity catalyzes the transfer of the AMP moiety of ATP to nicotinamide ribonucleotide to form NAD(+). The NMN adenylyltransferase domain also functions as the NAD and ATP sensor. The chain is Trifunctional NAD biosynthesis/regulator protein NadR (nadR) from Escherichia coli (strain K12).